The primary structure comprises 410 residues: F-box/WD-40 repeat-containing protein 1 (410 aa).

An F-box domain is found at 32–79; it reads SKECSLLPFELFEEILCRVPTKSLLRLKLTCKRWLALFNDKRFIYKHL. 2 WD repeats span residues 109–150 and 269–309; these read PNKF…VRWI and DVHN…NGVS.

The polypeptide is F-box/WD-40 repeat-containing protein 1 (FBW1) (Arabidopsis thaliana (Mouse-ear cress)).